A 452-amino-acid chain; its full sequence is Neuromedin-K receptor (452 aa).

The Extracellular segment spans residues 1-71 (MASVPRGENW…TNQFVQPSWR (71 aa)). N-linked (GlcNAc...) asparagine glycans are attached at residues asparagine 9, asparagine 23, asparagine 40, and asparagine 60. Residues 72–94 (IALWSLAYGLVVAVAVFGNLIVI) traverse the membrane as a helical segment. Over 95–104 (WIILAHKRMR) the chain is Cytoplasmic. The chain crosses the membrane as a helical span at residues 105–126 (TVTNYFLVNLAFSDASVAAFNT). At 127-146 (LINFIYGLHSEWYFGANYCR) the chain is on the extracellular side. An intrachain disulfide couples cysteine 145 to cysteine 220. A helical membrane pass occupies residues 147–168 (FQNFFPITAVFASIYSMTAIAV). Residues 169 to 188 (DRYMAIIDPLKPRLSATATK) lie on the Cytoplasmic side of the membrane. A helical membrane pass occupies residues 189-209 (IVIGSIWILAFLLAFPQCLYS). Residues 210-232 (KIKVMPGRTLCYVQWPEGPKQHF) lie on the Extracellular side of the membrane. A helical membrane pass occupies residues 233-257 (TYHIIVIILVYCFPLLIMGVTYTIV). Residues 258–286 (GITLWGGEIPGDTCDKYHEQLKAKRKVVK) lie on the Cytoplasmic side of the membrane. The helical transmembrane segment at 287-308 (MMIIVVVTFAICWLPYHVYFIL) threads the bilayer. Topologically, residues 309-321 (TAIYQQLNRWKYI) are extracellular. The helical transmembrane segment at 322-346 (QQVYLASFWLAMSSTMYNPIIYCCL) threads the bilayer. Topologically, residues 347-452 (NKRFRAGFKR…SPYTSVDEYS (106 aa)) are cytoplasmic. Residue cysteine 361 is the site of S-palmitoyl cysteine attachment. Residues 400–452 (FDPNDGDPTKSSRKKRAVPRDPSANGCSHRGSKSASTTSSFISSPYTSVDEYS) are disordered. Over residues 432 to 452 (KSASTTSSFISSPYTSVDEYS) the composition is skewed to low complexity.

It belongs to the G-protein coupled receptor 1 family. Post-translationally, the anchoring of this receptor to the plasma membrane is probably mediated by the palmitoylation of a cysteine residue.

The protein localises to the cell membrane. In terms of biological role, this is a receptor for the tachykinin neuropeptide neuromedin-K (neurokinin B). It is associated with G proteins that activate a phosphatidylinositol-calcium second messenger system. The rank order of affinity of this receptor to tachykinins is: neuromedin-K &gt; substance K &gt; substance P. The protein is Neuromedin-K receptor (Tacr3) of Rattus norvegicus (Rat).